A 295-amino-acid polypeptide reads, in one-letter code: MRKLSRCEDGYVKIQGIYIYYKVCKAENEKAKLMTLHGGPGMSHDYLLSLTDLAEKGITVLFYDQFGCGRSEEPEKEKFTIDYGVEEAEAVKKNIFGDDKVFLMGSSYGGALALAYAVKYQAHLKGLIISGGLSSVPLTVKEMQRLIDELPEKYRNAIRKYGEVGDYQNPEYQEAVNYFYHQHLLRSEDWPPEVLKSLEYAEERNVYRTMNGPNEFTITGTIRDWDITDKIGIISVPTLITVGEFDEVTQNVAEVIHSKIDNSQLIVFKACSHLTMWEDRDEYNRILLQFIEKNI.

The 245-residue stretch at 35 to 279 (TLHGGPGMSH…ACSHLTMWED (245 aa)) folds into the AB hydrolase-1 domain. The active-site Nucleophile is the Ser-107. Asp-246 is a catalytic residue. His-273 functions as the Proton donor in the catalytic mechanism.

This sequence belongs to the peptidase S33 family. In terms of assembly, part of the tricorn proteolytic complex.

It catalyses the reaction Release of N-terminal proline from a peptide.. Functionally, cleaves H-Pro-AMC as well as a wide spectrum of amino acid substrates and several peptide substrates without a proline at the N-terminus. In conjunction with the three factors F1, F2 and F3, Tricorn degrades oligopeptides in a sequential manner, yielding free amino acids. This Thermoplasma volcanium (strain ATCC 51530 / DSM 4299 / JCM 9571 / NBRC 15438 / GSS1) protein is Proline iminopeptidase (pip).